We begin with the raw amino-acid sequence, 219 residues long: UPF0502 protein Gura_0277 (219 aa).

The protein belongs to the UPF0502 family.

The protein is UPF0502 protein Gura_0277 of Geotalea uraniireducens (strain Rf4) (Geobacter uraniireducens).